A 398-amino-acid chain; its full sequence is Acetyl-CoA acetyltransferase (398 aa).

N-acetylserine is present on serine 2. Cysteine 91 acts as the Acyl-thioester intermediate in catalysis. Residues tyrosine 186 and lysine 231 each coordinate CoA. Tyrosine 186 serves as a coordination point for K(+). Residues alanine 248, alanine 249, and alanine 251 each contribute to the K(+) site. Residue serine 252 participates in CoA binding. Position 350 (valine 350) interacts with K(+). Active-site proton acceptor residues include histidine 354 and cysteine 384.

It belongs to the thiolase-like superfamily. Thiolase family. Homotetramer.

Its subcellular location is the cytoplasm. The catalysed reaction is 2 acetyl-CoA = acetoacetyl-CoA + CoA. It participates in metabolic intermediate biosynthesis; (R)-mevalonate biosynthesis; (R)-mevalonate from acetyl-CoA: step 1/3. Functionally, acetyl-CoA acetyltransferase; part of the first module of ergosterol biosynthesis pathway that includes the early steps of the pathway, conserved across all eukaryotes, and which results in the formation of mevalonate from acetyl-coenzyme A (acetyl-CoA). In this module, the acetyl-CoA acetyltransferase ERG10 catalyzes the formation of acetoacetyl-CoA. The hydroxymethylglutaryl-CoA synthase ERG13 then condenses acetyl-CoA with acetoacetyl-CoA to form HMG-CoA. The rate-limiting step of the early module is the reduction to mevalonate by the 3-hydroxy-3-methylglutaryl-coenzyme A (HMG-CoA) reductases HMG1 and HMG2 which are derived from a single ancestral HMGR gene by gene duplication. In Saccharomyces pastorianus (strain ATCC 76670 / Carlsberg bottom yeast no.2 / CBS 1503 / CLIB 180 / NBRC 10610 / NRRL Y-1525) (Saaz-type lager yeast), this protein is Acetyl-CoA acetyltransferase.